A 460-amino-acid chain; its full sequence is Elongation factor 1-alpha (460 aa).

A N,N,N-trimethylglycine modification is found at G2. The residue at position 3 (K3) is an N6,N6-dimethyllysine; alternate. Residue K3 is modified to N6-methyllysine; alternate. Positions 5-240 (KTHVNLVVIG…DAIEPPVRPS (236 aa)) constitute a tr-type G domain. The tract at residues 14–21 (GHVDAGKS) is G1. 14–21 (GHVDAGKS) is a binding site for GTP. K30 is modified (N6-methyllysine). A G2 region spans residues 70–74 (GITID). K79 carries the post-translational modification N6,N6,N6-trimethyllysine. Residues 91 to 94 (DAPG) form a G3 region. GTP-binding positions include 91-95 (DAPGH) and 153-156 (NKMD). Residues 153-156 (NKMD) form a G4 region. The tract at residues 192–194 (SGW) is G5. N6,N6-dimethyllysine; alternate is present on K317. An N6-methyllysine; alternate modification is found at K317. K391 is modified (N6-methyllysine).

This sequence belongs to the TRAFAC class translation factor GTPase superfamily. Classic translation factor GTPase family. EF-Tu/EF-1A subfamily.

The protein resides in the cytoplasm. Its function is as follows. This protein promotes the GTP-dependent binding of aminoacyl-tRNA to the A-site of ribosomes during protein biosynthesis. The protein is Elongation factor 1-alpha (TEF) of Yarrowia lipolytica (strain CLIB 122 / E 150) (Yeast).